We begin with the raw amino-acid sequence, 341 residues long: uncharacterized protein (341 aa).

The chain crosses the membrane as a helical span at residues Val-315–Met-337.

It is found in the cell membrane. This is an uncharacterized protein from Bacillus subtilis (strain 168).